Reading from the N-terminus, the 688-residue chain is MELEVPDEAESAEAGAVTAEAAWSAESGAAAGMTQKKAILAEAPLVTGQPGPGHGKKLGHRGVDASGETTYKKTTSSTLKGAIQLGIGYTVGNLSSKPERDVLMQDFYVVESIFFPSEGSNLTPAHHFQDFRFKTYAPVAFRYFRELFGIRPDDYLYSLCNEPLIELSNPGASGSVFYVTSDDEFIIKTVMHKEAEFLQKLLPGYYMNLNQNPRTLLPKFYGLYCVQSGGKNIRVVVMNNVLPRVVKMHLKFDLKGSTYKRRASKKEKEKSLPTYKDLDFMQDMPEGLLLDSDTFGALVKTLQRDCLVLESFKIMDYSLLLGVHNIDQQERERQAEGAQSKADEKRPVAQKALYSTARESIQGGAARGEAIETDDTMGGIPAVNGRGERLLLHIGIIDILQSYRFIKKLEHTWKALVHDGDTVSVHRPSFYAERFFKFMSSTVFRKSSSLKSSPSKKGRGALLAVKPLGPTAAFSASQIPSEREDVQYDLRGARSYPTLEDEGRPDLLPCTPPSFEEATTASIATTLSSTSLSIPERSPSDTSEQPRYRRRTQSSGQDGRPQEELHAEDLQKITVQVEPVCGVGVVVPKEQGAGVEVPPSGASAAATVEVDAASQASEPASQASDEEDAPSTDIYFFAHGRYWLFSPRRRRLRAVTPSHTGAPTDGRSWVYSPLHYSARPASDGESDT.

Residues 48–71 (GQPGPGHGKKLGHRGVDASGETTY) form a disordered region. Positions 75 to 443 (TSSTLKGAIQ…RFFKFMSSTV (369 aa)) constitute a PIPK domain. N6-acetyllysine occurs at positions 265 and 268. R459 is subject to Asymmetric dimethylarginine; alternate. An Omega-N-methylarginine; alternate modification is found at R459. Low complexity predominate over residues 525 to 534 (TTLSSTSLSI). 2 disordered regions span residues 525 to 565 (TTLS…QEEL) and 592 to 629 (GAGVEVPPSGASAAATVEVDAASQASEPASQASDEEDA). S554 carries the phosphoserine modification. The segment covering 602–623 (ASAAATVEVDAASQASEPASQA) has biased composition (low complexity). Y635 carries the phosphotyrosine; by EGFR modification. A Phosphotyrosine; by CSK modification is found at Y671. Residue S672 is modified to Phosphoserine; by CDK5, MAPK1 and CDK1. 2 positions are modified to phosphoserine: S682 and S686. Phosphothreonine is present on T688.

As to quaternary structure, interacts with TLN1. Interacts with TLN2; interaction stimulates 1-phosphatidylinositol-4-phosphate 5-kinase activity. May compete with beta-integrins for the same binding site on TLN1 and TLN2. Interacts with ARF6; interaction stimulates 1-phosphatidylinositol-4-phosphate 5-kinase activity. Interacts with AP2B1. Interacts with AP2M1; phosphorylation of PIP5K1C by CSK disrupts the interaction; clathrin competes with PIP5K1C. Interacts with CDH1. Interacts with CSK. Interacts with PLCG1; interaction is abolished upon EGF stimulation. Interacts with LAPTM4B; promotes SNX5 association with LAPTM4B; kinase activity of PIP5K1C is required; interaction is regulated by phosphatidylinositol 4,5-bisphosphate generated by PIP5K1C. Post-translationally, phosphorylation on Ser-672 negatively regulates binding to TLN2 and is strongly stimulated in mitosis. Phosphorylation on Tyr-671 is necessary for targeting to focal adhesions. Phosphorylation on Ser-672 and Tyr-671 are mutually exclusive. Phosphorylated by SYK and CSK. Tyrosine phosphorylation is enhanced by PTK2 signaling. Phosphorylated at Tyr-635 upon EGF stimulation. Some studies suggest that phosphorylation on Tyr-671 enhances binding to tailins (TLN1 and TLN2); others that phosphorylation at Tyr-671 does not directly enhance binding to tailins (TLN1 and TLN2) but may act indirectly by inhibiting phosphorylation at Ser-672. Acetylation at Lys-265 and Lys-268 seems to decrease lipid kinase activity. Deacetylation of these sites by SIRT1 positively regulates the exocytosis of TSH-containing granules from pituitary cells.

The protein localises to the cell membrane. It localises to the endomembrane system. Its subcellular location is the cytoplasm. It is found in the cell junction. The protein resides in the focal adhesion. The protein localises to the adherens junction. It localises to the cell projection. Its subcellular location is the ruffle membrane. It is found in the phagocytic cup. The protein resides in the uropodium. It carries out the reaction a 1,2-diacyl-sn-glycero-3-phospho-(1D-myo-inositol 4-phosphate) + ATP = a 1,2-diacyl-sn-glycero-3-phospho-(1D-myo-inositol-4,5-bisphosphate) + ADP + H(+). It catalyses the reaction 1-octadecanoyl-2-(5Z,8Z,11Z,14Z)-eicosatetraenoyl-sn-glycero-3-phospho-1D-myo-inositol 4-phosphate + ATP = 1-octadecanoyl-2-(5Z,8Z,11Z,14Z)-eicosatetraenoyl-sn-glycero-3-phospho-1D-myo-inositol 4,5-bisphosphate + ADP + H(+). The catalysed reaction is 1-octadecanoyl-2-(9Z)-octadecenoyl-sn-glycero-3-phospho-1D-myo-inositol 4-phosphate + ATP = 1-octadecanoyl-2-(9Z)-octadecenoyl-sn-glycero-3-phospho-1D-myo-inositol 4,5-bisphosphate + ADP + H(+). The enzyme catalyses 1-octadecanoyl-2-(9Z)-octadecenoyl-sn-glycero-3-phospho-1D-myo-inositol + ATP = 1-octadecanoyl-2-(9Z)-octadecenoyl-sn-glycero-3-phospho-1D-myo-inositol 5-phosphate + ADP + H(+). It carries out the reaction 1-octadecanoyl-2-(9Z,12Z)-octadecadienoyl-sn-glycero-3-phospho-1D-myo-inositol + ATP = 1-octadecanoyl-2-(9Z,12Z)-octadecadienoyl-sn-glycero-3-phospho-1D-myo-inositol 5-phosphate + ADP + H(+). It catalyses the reaction 1-octadecanoyl-2-(5Z,8Z,11Z,14Z-eicosatetraenoyl)-sn-glycero-3-phospho-(1D-myo-inositol) + ATP = 1-octadecanoyl-2-(5Z,8Z,11Z,14Z)-eicosatetraenoyl-sn-glycero-3-phospho-1D-myo-inositol 5-phosphate + ADP + H(+). The catalysed reaction is 1,2-di-(9Z,12Z)-octadecadienoyl-sn-glycero-3-phospho-1D-myo-inositol + ATP = 1,2-di(9Z,12Z)-octadecadienoyl-sn-glycero-3-phospho-1D-myo-inositol 5-phosphate + ADP + H(+). Its function is as follows. Catalyzes the phosphorylation of phosphatidylinositol 4-phosphate (PtdIns(4)P/PI4P) to form phosphatidylinositol 4,5-bisphosphate (PtdIns(4,5)P2/PIP2), a lipid second messenger that regulates several cellular processes such as signal transduction, vesicle trafficking, actin cytoskeleton dynamics, cell adhesion, and cell motility. PtdIns(4,5)P2 can directly act as a second messenger or can be utilized as a precursor to generate other second messengers: inositol 1,4,5-trisphosphate (IP3), diacylglycerol (DAG) or phosphatidylinositol-3,4,5-trisphosphate (PtdIns(3,4,5)P3/PIP3). PIP5K1A-mediated phosphorylation of PtdIns(4)P is the predominant pathway for PtdIns(4,5)P2 synthesis. Together with PIP5K1A, is required for phagocytosis, both enzymes regulating different types of actin remodeling at sequential steps. Promotes particle attachment by generating the pool of PtdIns(4,5)P2 that induces controlled actin depolymerization to facilitate Fc-gamma-R clustering. Mediates RAC1-dependent reorganization of actin filaments. Required for synaptic vesicle transport. Controls the plasma membrane pool of PtdIns(4,5)P2 implicated in synaptic vesicle endocytosis and exocytosis. Plays a role in endocytosis mediated by clathrin and AP-2 (adaptor protein complex 2). Required for clathrin-coated pits assembly at the synapse. Participates in cell junction assembly. Modulates adherens junctions formation by facilitating CDH1/cadherin trafficking. Required for focal adhesion dynamics. Modulates the targeting of talins (TLN1 and TLN2) to the plasma membrane and their efficient assembly into focal adhesions. Regulates the interaction between talins (TLN1 and TLN2) and beta-integrins. Required for uropodium formation and retraction of the cell rear during directed migration. Has a role in growth factor-stimulated directional cell migration and adhesion. Required for talin assembly into nascent adhesions forming at the leading edge toward the direction of the growth factor. Negative regulator of T-cell activation and adhesion. Negatively regulates integrin alpha-L/beta-2 (LFA-1) polarization and adhesion induced by T-cell receptor. Together with PIP5K1A has a role during embryogenesis and together with PIP5K1B may have a role immediately after birth. In Rattus norvegicus (Rat), this protein is Phosphatidylinositol 4-phosphate 5-kinase type-1 gamma.